We begin with the raw amino-acid sequence, 336 residues long: Fimbrial adhesin PapGII (336 aa).

A signal peptide spans 1–20 (MKKWFPALLFSLCVSGESSA). 2 cysteine pairs are disulfide-bonded: Cys64-Cys138 and Cys217-Cys249. D-galactose-binding positions include Glu79 and 124–127 (GYKW).

The protein belongs to the adhesin PapG family.

Its subcellular location is the secreted. The protein resides in the fimbrium. Its function is as follows. Tip adhesin component of type P pili that plays a critical role in kidney infection through targeted interaction with the globoseries glycolipids containing the Gal-alpha(1-4)-Gal disaccharide present on uroepithelial cells. In turn, transcriptionally regulates host gene expression in kidney cells, leading to inflammatory pathway activation and renal tissue damage. Acts thereby as key determinant of invasive uropathogenic E.coli (UPEC), which cause pyelonephritis and urinary-source bacteremia. This chain is Fimbrial adhesin PapGII, found in Escherichia coli O6:H1 (strain CFT073 / ATCC 700928 / UPEC).